We begin with the raw amino-acid sequence, 77 residues long: MADTLERVTKIIVDRLGVDEADVKLEASFKEDLGADSLDVVELVMELEDEFDMEISDEDAEKIATVGDAVNYIQNQQ.

In terms of domain architecture, Carrier spans 2–77 (ADTLERVTKI…DAVNYIQNQQ (76 aa)). O-(pantetheine 4'-phosphoryl)serine is present on S37.

It belongs to the acyl carrier protein (ACP) family. In terms of processing, 4'-phosphopantetheine is transferred from CoA to a specific serine of apo-ACP by AcpS. This modification is essential for activity because fatty acids are bound in thioester linkage to the sulfhydryl of the prosthetic group.

The protein resides in the cytoplasm. It participates in lipid metabolism; fatty acid biosynthesis. Carrier of the growing fatty acid chain in fatty acid biosynthesis. The chain is Acyl carrier protein (acpA) from Bacillus subtilis (strain 168).